Here is a 160-residue protein sequence, read N- to C-terminus: Large ribosomal subunit protein eL21 (160 aa).

Basic and acidic residues-rich tracts occupy residues asparagine 112–glycine 123 and arginine 136–glycine 145. A disordered region spans residues asparagine 112–glycine 145.

Belongs to the eukaryotic ribosomal protein eL21 family. As to quaternary structure, component of the large ribosomal subunit.

The protein resides in the cytoplasm. Its subcellular location is the cytosol. It is found in the endoplasmic reticulum. Component of the large ribosomal subunit. The ribosome is a large ribonucleoprotein complex responsible for the synthesis of proteins in the cell. In Oryctolagus cuniculus (Rabbit), this protein is Large ribosomal subunit protein eL21 (RPL21).